The primary structure comprises 803 residues: Volume-regulated anion channel subunit LRRC8C (803 aa).

Residues 1–22 (MIPVTEFRQFSEQQPAFRVLKP) lie on the Cytoplasmic side of the membrane. Residues 23 to 43 (WWDVFTDYLSVAMLMIGVFGC) form a helical membrane-spanning segment. Over 44 to 125 (TLQVMQDKII…YERALHWYAK (82 aa)) the chain is Extracellular. Disulfide bonds link Cys54/Cys308 and Cys115/Cys293. 2 N-linked (GlcNAc...) asparagine glycosylation sites follow: Asn64 and Asn70. The helical transmembrane segment at 126–146 (YFPYLVLIHTLVFMLCSNFWF) threads the bilayer. Topologically, residues 147 to 266 (KFPGSSSKIE…ILYAMYVRQT (120 aa)) are cytoplasmic. A disordered region spans residues 177-209 (EVSGEDSEEKDNRKNNMSRSNTTQSGPEGSLVN). A compositionally biased stretch (polar residues) spans 191-209 (NNMSRSNTTQSGPEGSLVN). Residues Ser212 and Ser215 each carry the phosphoserine modification. Residues 267–287 (VLKVIKFLIIIAYNSALVSKV) form a helical membrane-spanning segment. The Extracellular segment spans residues 288 to 320 (QFTVDCNVDIQDMTGYKNFSCNHTMAHLFSKLS). A helical membrane pass occupies residues 321–341 (FCYLCFVSIYGLTCLYTLYWL). The Cytoplasmic portion of the chain corresponds to 342-803 (FYRSLKEYSF…SDVREQMKTE (462 aa)). LRR repeat units follow at residues 397 to 419 (ENKLKQLNLNNEWTPDKLRQKLQ), 420 to 443 (TNAHNRLELPLIMLSGLPDTVFEI), 446 to 465 (LQSLKLEIIKNVMIPATIAQ), 468 to 490 (NLQELSLHQCSVKIHSAALSFLK), 492 to 513 (NLKVLSVKFDDMRELPPWMYGL), 515 to 536 (NLEELYLVGSLSHDISRNVTLE), 543 to 563 (SLKILSIKSNVSKIPQAVVDV), 566 to 586 (HLQKMCIHNDGTKLVMLNNLK), 590 to 611 (NLTELELVHCDLERIPHAVFSL), 613 to 634 (SLQELDLKENNLKSIEEIVSFQ), 638 to 659 (KLTVLKLWHNSITYIPEHIKKL), 661 to 682 (SLERLSFSHNKIEVLPSHLFLC), 684 to 705 (KIRYLDLSYNDIRFIPPEIGVL), 707 to 728 (SLQYFSITCNKVESLPDELYFC), 730 to 751 (KLKTLKIGKNSLSVLSPKIGNL), 753 to 774 (FLSYLDVKGNHFEILPPELGDC), and 776 to 799 (ALKRAGLVVEDALFETLPSDVREQ).

This sequence belongs to the LRRC8 family. Heterohexamer; oligomerizes with other LRRC8 proteins (LRRC8A, LRRC8B, LRRC8D and/or LRRC8E) to form a heterohexamer. Homoheptamer; inactive, likely because it is not targeted to the plasma membrane in the absence of LRRC8A. In vivo, the subunit composition may depend primarily on expression levels, and heterooligomeric channels containing various proportions of the different LRRC8 proteins may coexist.

The protein localises to the cell membrane. It is found in the endoplasmic reticulum membrane. The enzyme catalyses chloride(in) = chloride(out). It catalyses the reaction iodide(out) = iodide(in). The catalysed reaction is taurine(out) = taurine(in). It carries out the reaction 2',3'-cGAMP(out) = 2',3'-cGAMP(in). Its function is as follows. Non-essential component of the volume-regulated anion channel (VRAC, also named VSOAC channel), an anion channel required to maintain a constant cell volume in response to extracellular or intracellular osmotic changes. The VRAC channel conducts iodide better than chloride and can also conduct organic osmolytes like taurine. Plays a redundant role in the efflux of amino acids, such as aspartate and glutamate, in response to osmotic stress. The VRAC channel also mediates transport of immunoreactive cyclic dinucleotide GMP-AMP (2'-3'-cGAMP), an immune messenger produced in response to DNA virus in the cytosol. Channel activity requires LRRC8A plus at least one other family member (LRRC8B, LRRC8C, LRRC8D or LRRC8E); channel characteristics depend on the precise subunit composition. The chain is Volume-regulated anion channel subunit LRRC8C from Bos taurus (Bovine).